Consider the following 239-residue polypeptide: Protein G1-like8 (239 aa).

Disordered stretches follow at residues methionine 1–serine 35 and lysine 149–valine 239. Over residues aspartate 9–glutamine 29 the composition is skewed to low complexity. In terms of domain architecture, ALOG spans arginine 32–lysine 159. A Nuclear localization signal motif is present at residues lysine 157–lysine 161. Positions glutamine 167 to histidine 178 are enriched in pro residues. 2 stretches are compositionally biased toward low complexity: residues glutamine 179 to glutamine 215 and threonine 223 to valine 239.

It belongs to the plant homeotic and developmental regulators ALOG protein family.

It is found in the nucleus. In terms of biological role, probable transcription regulator that acts as a developmental regulator by promoting cell growth in response to light. In Oryza sativa subsp. indica (Rice), this protein is Protein G1-like8.